The sequence spans 194 residues: dCTP deaminase (194 aa).

DCTP is bound by residues R110 to R115, D128, V136 to E138, Y171, K178, and Q182. The active-site Proton donor/acceptor is E138.

Belongs to the dCTP deaminase family. Homotrimer.

The enzyme catalyses dCTP + H2O + H(+) = dUTP + NH4(+). Its pathway is pyrimidine metabolism; dUMP biosynthesis; dUMP from dCTP (dUTP route): step 1/2. Functionally, catalyzes the deamination of dCTP to dUTP. The polypeptide is dCTP deaminase (Pasteurella multocida (strain Pm70)).